Consider the following 683-residue polypeptide: Rhophilin-2-A (683 aa).

Positions 25 to 99 (KSIAQTGRSK…LERLNISVEV (75 aa)) constitute an REM-1 domain. The 392-residue stretch at 110 to 501 (PLIPLGLKET…TDIFQRLGPL (392 aa)) folds into the BRO1 domain. The 78-residue stretch at 515–592 (KICITKEDGD…QSIEIQVISI (78 aa)) folds into the PDZ domain.

It belongs to the RHPN family. As to quaternary structure, interacts with RhoA.

It localises to the cytoplasm. Its subcellular location is the perinuclear region. Functionally, binds specifically to GTP-Rho. This is Rhophilin-2-A (rhpn2-a) from Xenopus laevis (African clawed frog).